We begin with the raw amino-acid sequence, 213 residues long: UPF0301 protein Aave_0907 (213 aa).

The interval 93 to 120 (MGPSSGKQAAGEGGAQAEGEGAEESAYA) is disordered.

Belongs to the UPF0301 (AlgH) family.

The protein is UPF0301 protein Aave_0907 of Paracidovorax citrulli (strain AAC00-1) (Acidovorax citrulli).